Consider the following 255-residue polypeptide: 6-phosphogluconolactonase 4 (255 aa).

Belongs to the glucosamine/galactosamine-6-phosphate isomerase family. 6-phosphogluconolactonase subfamily.

It is found in the cytoplasm. It carries out the reaction 6-phospho-D-glucono-1,5-lactone + H2O = 6-phospho-D-gluconate + H(+). It participates in carbohydrate degradation; pentose phosphate pathway; D-ribulose 5-phosphate from D-glucose 6-phosphate (oxidative stage): step 2/3. Functionally, involved in the pentose phosphate pathway via hydrolysis of 6-phosphogluconolactone to 6-phosphogluconate. This is 6-phosphogluconolactonase 4 from Saccharomyces cerevisiae (strain ATCC 204508 / S288c) (Baker's yeast).